The sequence spans 305 residues: UDP-3-O-acyl-N-acetylglucosamine deacetylase (305 aa).

His79, His238, and Asp242 together coordinate Zn(2+). The Proton donor role is filled by His265.

It belongs to the LpxC family. Zn(2+) serves as cofactor.

The enzyme catalyses a UDP-3-O-[(3R)-3-hydroxyacyl]-N-acetyl-alpha-D-glucosamine + H2O = a UDP-3-O-[(3R)-3-hydroxyacyl]-alpha-D-glucosamine + acetate. The protein operates within glycolipid biosynthesis; lipid IV(A) biosynthesis; lipid IV(A) from (3R)-3-hydroxytetradecanoyl-[acyl-carrier-protein] and UDP-N-acetyl-alpha-D-glucosamine: step 2/6. In terms of biological role, catalyzes the hydrolysis of UDP-3-O-myristoyl-N-acetylglucosamine to form UDP-3-O-myristoylglucosamine and acetate, the committed step in lipid A biosynthesis. The polypeptide is UDP-3-O-acyl-N-acetylglucosamine deacetylase (Klebsiella pneumoniae subsp. pneumoniae (strain ATCC 700721 / MGH 78578)).